The chain runs to 59 residues: UPF0391 membrane protein lpg2521 (59 aa).

Transmembrane regions (helical) follow at residues 5 to 25 (ALIF…GIAV) and 30 to 50 (IAKI…IMGL).

This sequence belongs to the UPF0391 family.

It is found in the cell membrane. The chain is UPF0391 membrane protein lpg2521 from Legionella pneumophila subsp. pneumophila (strain Philadelphia 1 / ATCC 33152 / DSM 7513).